The primary structure comprises 362 residues: Adenosine deaminase (362 aa).

2 residues coordinate Zn(2+): His19 and His21. The substrate site is built by His21, Asp23, and Gly181. His208 contacts Zn(2+). Catalysis depends on Glu211, which acts as the Proton donor. Asp300 provides a ligand contact to Zn(2+).

The protein belongs to the metallo-dependent hydrolases superfamily. Adenosine and AMP deaminases family. Adenosine deaminase subfamily. It depends on Zn(2+) as a cofactor.

It catalyses the reaction adenosine + H2O + H(+) = inosine + NH4(+). It carries out the reaction 2'-deoxyadenosine + H2O + H(+) = 2'-deoxyinosine + NH4(+). Functionally, catalyzes the hydrolytic deamination of adenosine and 2-deoxyadenosine. This is Adenosine deaminase from Mycobacterium sp. (strain JLS).